A 344-amino-acid polypeptide reads, in one-letter code: C-C chemokine receptor-like 2 (344 aa).

Residues Met-1–Ser-43 lie on the Extracellular side of the membrane. Asn-3 carries N-linked (GlcNAc...) asparagine glycosylation. The helical transmembrane segment at Leu-44–Val-64 threads the bilayer. At Lys-65 to Asn-74 the chain is on the cytoplasmic side. A helical transmembrane segment spans residues Ile-75 to Ala-95. Residues His-96 to Lys-104 lie on the Extracellular side of the membrane. Cysteines 103 and 181 form a disulfide. Residues Ile-105–Thr-125 form a helical membrane-spanning segment. Over Leu-126–Gly-148 the chain is Cytoplasmic. A helical transmembrane segment spans residues Ile-149–Val-169. The Extracellular portion of the chain corresponds to Tyr-170 to His-198. Residues Phe-199–Leu-219 traverse the membrane as a helical segment. The Cytoplasmic portion of the chain corresponds to Tyr-220–Lys-238. A helical transmembrane segment spans residues Leu-239–Phe-259. At Leu-260–Ser-281 the chain is on the extracellular side. A helical transmembrane segment spans residues Val-282–Phe-302. Over Leu-303–Val-344 the chain is Cytoplasmic. Residues Arg-323–Val-344 are disordered. The span at Ser-334–Val-344 shows a compositional bias: basic and acidic residues.

It belongs to the G-protein coupled receptor 1 family.

It is found in the cell membrane. In terms of biological role, receptor for CCL19 and chemerin/RARRES2. Does not appear to be a signaling receptor, but may have a role in modulating chemokine-triggered immune responses by capturing and internalizing CCL19 or by presenting RARRES2 ligand to CMKLR1, a functional signaling receptor. Plays a critical role for the development of Th2 responses. This chain is C-C chemokine receptor-like 2 (CCRL2), found in Macaca mulatta (Rhesus macaque).